A 163-amino-acid polypeptide reads, in one-letter code: ATP synthase subunit b 1 (163 aa).

A helical membrane pass occupies residues 7 to 27; it reads PETWVAIAFVILMGLFAYLGV.

It belongs to the ATPase B chain family. F-type ATPases have 2 components, F(1) - the catalytic core - and F(0) - the membrane proton channel. F(1) has five subunits: alpha(3), beta(3), gamma(1), delta(1), epsilon(1). F(0) has three main subunits: a(1), b(2) and c(10-14). The alpha and beta chains form an alternating ring which encloses part of the gamma chain. F(1) is attached to F(0) by a central stalk formed by the gamma and epsilon chains, while a peripheral stalk is formed by the delta and b chains.

The protein localises to the cell inner membrane. Its function is as follows. F(1)F(0) ATP synthase produces ATP from ADP in the presence of a proton or sodium gradient. F-type ATPases consist of two structural domains, F(1) containing the extramembraneous catalytic core and F(0) containing the membrane proton channel, linked together by a central stalk and a peripheral stalk. During catalysis, ATP synthesis in the catalytic domain of F(1) is coupled via a rotary mechanism of the central stalk subunits to proton translocation. In terms of biological role, component of the F(0) channel, it forms part of the peripheral stalk, linking F(1) to F(0). This is ATP synthase subunit b 1 from Bradyrhizobium sp. (strain BTAi1 / ATCC BAA-1182).